The following is a 204-amino-acid chain: Neurensin-2 (204 aa).

2 consecutive transmembrane segments (helical) span residues 66 to 86 and 122 to 142; these read LSSG…GYAV and LCVA…IGWL. Positions 178–204 are disordered; sequence SGQSWFSPPASPFGQSSVQTIQPKRDS. The span at 190–204 shows a compositional bias: polar residues; it reads FGQSSVQTIQPKRDS.

The protein belongs to the VMP family.

Its subcellular location is the membrane. Its function is as follows. May play a role in maintenance and/or transport of vesicles. The polypeptide is Neurensin-2 (NRSN2) (Homo sapiens (Human)).